The sequence spans 233 residues: Uridylate kinase (233 aa).

An ATP-binding site is contributed by Gly-9–Ser-10. Gly-43 serves as a coordination point for UMP. 2 residues coordinate ATP: Gly-44 and Arg-48. UMP contacts are provided by residues Asp-65 and Val-113–Thr-119. Thr-139, Tyr-145, and Asp-148 together coordinate ATP.

The protein belongs to the UMP kinase family. Homohexamer.

It localises to the cytoplasm. The catalysed reaction is UMP + ATP = UDP + ADP. It participates in pyrimidine metabolism; CTP biosynthesis via de novo pathway; UDP from UMP (UMPK route): step 1/1. Its activity is regulated as follows. Inhibited by UTP. Catalyzes the reversible phosphorylation of UMP to UDP. The protein is Uridylate kinase of Methanosarcina mazei (strain ATCC BAA-159 / DSM 3647 / Goe1 / Go1 / JCM 11833 / OCM 88) (Methanosarcina frisia).